Here is a 339-residue protein sequence, read N- to C-terminus: Holliday junction branch migration complex subunit RuvB (339 aa).

Residues 1 to 22 are disordered; sequence MIDADPTLRPEPLPEDNDRALR. The tract at residues 1–182 is large ATPase domain (RuvB-L); it reads MIDADPTLRP…FGIPTRLQFY (182 aa). ATP-binding positions include L21, R22, G63, K66, T67, T68, 129-131, R172, Y182, and R219; that span reads EDF. T67 is a Mg(2+) binding site. The tract at residues 183-253 is small ATPAse domain (RuvB-S); it reads TIDELFEIVS…LADGALTRLG (71 aa). The interval 256–339 is head domain (RuvB-H); sequence QLGLDGADRR…PPKSQSDLFG (84 aa). Residues R292, R311, and R316 each coordinate DNA.

It belongs to the RuvB family. Homohexamer. Forms an RuvA(8)-RuvB(12)-Holliday junction (HJ) complex. HJ DNA is sandwiched between 2 RuvA tetramers; dsDNA enters through RuvA and exits via RuvB. An RuvB hexamer assembles on each DNA strand where it exits the tetramer. Each RuvB hexamer is contacted by two RuvA subunits (via domain III) on 2 adjacent RuvB subunits; this complex drives branch migration. In the full resolvosome a probable DNA-RuvA(4)-RuvB(12)-RuvC(2) complex forms which resolves the HJ.

The protein localises to the cytoplasm. The enzyme catalyses ATP + H2O = ADP + phosphate + H(+). The RuvA-RuvB-RuvC complex processes Holliday junction (HJ) DNA during genetic recombination and DNA repair, while the RuvA-RuvB complex plays an important role in the rescue of blocked DNA replication forks via replication fork reversal (RFR). RuvA specifically binds to HJ cruciform DNA, conferring on it an open structure. The RuvB hexamer acts as an ATP-dependent pump, pulling dsDNA into and through the RuvAB complex. RuvB forms 2 homohexamers on either side of HJ DNA bound by 1 or 2 RuvA tetramers; 4 subunits per hexamer contact DNA at a time. Coordinated motions by a converter formed by DNA-disengaged RuvB subunits stimulates ATP hydrolysis and nucleotide exchange. Immobilization of the converter enables RuvB to convert the ATP-contained energy into a lever motion, pulling 2 nucleotides of DNA out of the RuvA tetramer per ATP hydrolyzed, thus driving DNA branch migration. The RuvB motors rotate together with the DNA substrate, which together with the progressing nucleotide cycle form the mechanistic basis for DNA recombination by continuous HJ branch migration. Branch migration allows RuvC to scan DNA until it finds its consensus sequence, where it cleaves and resolves cruciform DNA. The chain is Holliday junction branch migration complex subunit RuvB from Ruegeria sp. (strain TM1040) (Silicibacter sp.).